Reading from the N-terminus, the 141-residue chain is Hemoglobin subunit alpha-A/Q/R/T (141 aa).

In terms of domain architecture, Globin spans 1–141 (VLSPADKTNV…VSTVLTSKYR (141 aa)). Residue S3 is modified to Phosphoserine. At K7 the chain carries N6-succinyllysine. Position 8 is a phosphothreonine (T8). An N6-succinyllysine modification is found at K11. Position 16 is an N6-acetyllysine; alternate (K16). Position 16 is an N6-succinyllysine; alternate (K16). Residue Y24 is modified to Phosphotyrosine. A Phosphoserine modification is found at S35. Position 40 is an N6-succinyllysine (K40). S49 is modified (phosphoserine). Residue H58 coordinates O2. H87 contacts heme b. S102 carries the phosphoserine modification. Residue T108 is modified to Phosphothreonine. Phosphoserine occurs at positions 124 and 131. Residues T134 and T137 each carry the phosphothreonine modification. Residue S138 is modified to Phosphoserine.

The protein belongs to the globin family. As to quaternary structure, heterotetramer of two alpha chains and two beta chains. In terms of tissue distribution, red blood cells.

Involved in oxygen transport from the lung to the various peripheral tissues. The protein is Hemoglobin subunit alpha-A/Q/R/T of Macaca fascicularis (Crab-eating macaque).